The following is a 509-amino-acid chain: GMP synthase [glutamine-hydrolyzing] (509 aa).

The region spanning 4–194 (KVIVLDFGGQ…LYEICGLTPD (191 aa)) is the Glutamine amidotransferase type-1 domain. The active-site Nucleophile is the cysteine 81. Active-site residues include histidine 168 and glutamate 170. The GMPS ATP-PPase domain occupies 195 to 384 (WTMESFAQKA…LGLPESIVWR (190 aa)). 222–228 (SGGVDSS) is a binding site for ATP.

Homodimer.

It carries out the reaction XMP + L-glutamine + ATP + H2O = GMP + L-glutamate + AMP + diphosphate + 2 H(+). It participates in purine metabolism; GMP biosynthesis; GMP from XMP (L-Gln route): step 1/1. Catalyzes the synthesis of GMP from XMP. This Carboxydothermus hydrogenoformans (strain ATCC BAA-161 / DSM 6008 / Z-2901) protein is GMP synthase [glutamine-hydrolyzing].